A 206-amino-acid polypeptide reads, in one-letter code: Protein phosphatase inhibitor 2 (206 aa).

A disordered region spans residues 1-36 (MAASTASHRPIKGILKNKTSAASPPVVPSAEQPRPI). Alanine 2 is modified (N-acetylalanine). Positions 12–17 (KGILKN) are required for binding PPP1CC. Positions 44–56 (KSQKWDEMNILAT) are required for binding the 'RVXF' binding groove of PPP1CC. Serine 45 is modified (phosphoserine; by ATM). The residue at position 74 (threonine 74) is a Phosphothreonine. Residues 75 to 143 (PYHNMIGDDE…EREKKRQFEM (69 aa)) are disordered. Residues 81–92 (GDDEDAYSDSEG) show a composition bias toward acidic residues. Phosphoserine occurs at positions 88 and 90. 2 positions are modified to phosphothreonine: threonine 97 and threonine 117. The span at 111–121 (SEPKYRTREQE) shows a compositional bias: basic and acidic residues. Phosphoserine occurs at positions 122, 123, and 131. The span at 122-131 (SSGEEDNDLS) shows a compositional bias: acidic residues. The span at 132–143 (PEEREKKRQFEM) shows a compositional bias: basic and acidic residues. The interval 148 to 151 (HYNE) is required for binding PPP1CC catalytic center, displacing metal ions and inhibition of PPP1CC catalytic activity. Residues 164 to 206 (KDLHDDDEDEEMAETADGDSMNVEESSQGSTTSDHLQHKSQSS) are disordered. Positions 168–180 (DDDEDEEMAETAD) are enriched in acidic residues. Residues 186–206 (VEESSQGSTTSDHLQHKSQSS) are compositionally biased toward polar residues.

Belongs to the protein phosphatase inhibitor 2 family. In terms of assembly, heterodimer with PP1. In terms of processing, phosphorylation on Ser-45 by ATM activates PP1 by dissociating the PP1-PPP1R2 complex. Phosphorylation on Thr-74 by GSK3 activates PP1 by dissociating the PP1-PPP1R2 complex.

Functionally, inhibitor of protein-phosphatase 1. The chain is Protein phosphatase inhibitor 2 (Ppp1r2) from Mus musculus (Mouse).